A 362-amino-acid chain; its full sequence is Chorismate synthase (362 aa).

Positions 48 and 54 each coordinate NADP(+). FMN is bound by residues 125-127, 238-239, Gly286, 301-305, and Arg327; these read RSS, NA, and KPTSS.

It belongs to the chorismate synthase family. Homotetramer. FMNH2 is required as a cofactor.

It catalyses the reaction 5-O-(1-carboxyvinyl)-3-phosphoshikimate = chorismate + phosphate. It participates in metabolic intermediate biosynthesis; chorismate biosynthesis; chorismate from D-erythrose 4-phosphate and phosphoenolpyruvate: step 7/7. In terms of biological role, catalyzes the anti-1,4-elimination of the C-3 phosphate and the C-6 proR hydrogen from 5-enolpyruvylshikimate-3-phosphate (EPSP) to yield chorismate, which is the branch point compound that serves as the starting substrate for the three terminal pathways of aromatic amino acid biosynthesis. This reaction introduces a second double bond into the aromatic ring system. This Granulibacter bethesdensis (strain ATCC BAA-1260 / CGDNIH1) protein is Chorismate synthase.